The sequence spans 134 residues: Fluoride-specific ion channel FluC (134 aa).

4 consecutive transmembrane segments (helical) span residues 7-27, 38-58, 69-89, and 110-130; these read LAVA…TIMA, GTLL…IVLV, LFLF…AAES, and VGSL…LLGH. Glycine 77 and threonine 80 together coordinate Na(+).

This sequence belongs to the fluoride channel Fluc/FEX (TC 1.A.43) family.

The protein localises to the cell inner membrane. The enzyme catalyses fluoride(in) = fluoride(out). With respect to regulation, na(+) is not transported, but it plays an essential structural role and its presence is essential for fluoride channel function. Its function is as follows. Fluoride-specific ion channel. Important for reducing fluoride concentration in the cell, thus reducing its toxicity. The polypeptide is Fluoride-specific ion channel FluC (Legionella pneumophila subsp. pneumophila (strain Philadelphia 1 / ATCC 33152 / DSM 7513)).